The sequence spans 330 residues: Malate dehydrogenase (330 aa).

NAD(+) is bound at residue 12–18 (GAAGQIG). Substrate-binding residues include R93 and R99. NAD(+) contacts are provided by residues N106, Q113, and 130 to 132 (VGN). Residues N132 and R163 each coordinate substrate. H188 (proton acceptor) is an active-site residue.

Belongs to the LDH/MDH superfamily. MDH type 2 family.

It carries out the reaction (S)-malate + NAD(+) = oxaloacetate + NADH + H(+). In terms of biological role, catalyzes the reversible oxidation of malate to oxaloacetate. In Legionella pneumophila (strain Lens), this protein is Malate dehydrogenase.